Reading from the N-terminus, the 274-residue chain is Proteasome subunit beta type-5-A (274 aa).

Residues 1 to 57 (MKLDTSGFETSMPMIGFGSSSDMLDELSSVPSFDLPRTKEFDGFQKKAKDMLKHAKG) constitute a propeptide, removed in mature form. T58 serves as the catalytic Nucleophile.

Belongs to the peptidase T1B family. In terms of assembly, component of the 20S core complex of the 26S proteasome. The 26S proteasome is composed of a core protease (CP), known as the 20S proteasome, capped at one or both ends by the 19S regulatory particle (RP/PA700). The 20S proteasome core is composed of 28 subunits that are arranged in four stacked rings, resulting in a barrel-shaped structure. The two end rings are each formed by seven alpha subunits, and the two central rings are each formed by seven beta subunits. The catalytic chamber with the active sites is on the inside of the barrel. In terms of tissue distribution, ubiquitous low levels, higher expression in siliques and flowers.

Its subcellular location is the cytoplasm. The protein localises to the nucleus. It catalyses the reaction Cleavage of peptide bonds with very broad specificity.. In terms of biological role, the proteasome is a multicatalytic proteinase complex which is characterized by its ability to cleave peptides with Arg, Phe, Tyr, Leu, and Glu adjacent to the leaving group at neutral or slightly basic pH. The proteasome has an ATP-dependent proteolytic activity. The sequence is that of Proteasome subunit beta type-5-A (PBE1) from Arabidopsis thaliana (Mouse-ear cress).